A 306-amino-acid polypeptide reads, in one-letter code: 2-phosphoglycerate kinase (306 aa).

The 90-residue stretch at 1–90 (MIMVQGEVSG…LWRKIRQCKE (90 aa)) folds into the ATP-cone domain.

It belongs to the 2-phosphoglycerate kinase family. Requires a divalent metal cation as cofactor.

The enzyme catalyses (2R)-2-phosphoglycerate + ATP = (2R)-2,3-bisphosphoglycerate + ADP + H(+). It participates in thermoadapter biosynthesis; cyclic 2,3-diphosphoglycerate biosynthesis; cyclic 2,3-diphosphoglycerate from 2-phospho-D-glycerate: step 1/2. Its function is as follows. Catalyzes the phosphorylation of 2-phosphoglycerate to 2,3-diphosphoglycerate. Involved in the biosynthesis of cyclic 2,3-bisphosphoglycerate, a thermoprotectant. The polypeptide is 2-phosphoglycerate kinase (Methanothermobacter thermautotrophicus (strain ATCC 29096 / DSM 1053 / JCM 10044 / NBRC 100330 / Delta H) (Methanobacterium thermoautotrophicum)).